We begin with the raw amino-acid sequence, 177 residues long: Protein GrpE (177 aa).

Composition is skewed to basic and acidic residues over residues 1–19 (MAKH…KETV) and 29–41 (SPEK…ANER). Residues 1 to 41 (MAKHKHEEHPEDVEVKETVETAEQAESASPEKSELELANER) are disordered.

The protein belongs to the GrpE family. As to quaternary structure, homodimer.

It is found in the cytoplasm. Participates actively in the response to hyperosmotic and heat shock by preventing the aggregation of stress-denatured proteins, in association with DnaK and GrpE. It is the nucleotide exchange factor for DnaK and may function as a thermosensor. Unfolded proteins bind initially to DnaJ; upon interaction with the DnaJ-bound protein, DnaK hydrolyzes its bound ATP, resulting in the formation of a stable complex. GrpE releases ADP from DnaK; ATP binding to DnaK triggers the release of the substrate protein, thus completing the reaction cycle. Several rounds of ATP-dependent interactions between DnaJ, DnaK and GrpE are required for fully efficient folding. The sequence is that of Protein GrpE from Streptococcus gordonii (strain Challis / ATCC 35105 / BCRC 15272 / CH1 / DL1 / V288).